Consider the following 1755-residue polypeptide: Periplakin (1755 aa).

The span at 1-11 (MHSLFRKRNKG) shows a compositional bias: basic residues. Positions 1–20 (MHSLFRKRNKGKYSPTVQTR) are disordered. Ser-14 carries the phosphoserine modification. Coiled-coil stretches lie at residues 16–125 (TVQT…KQMY) and 182–387 (LAKD…QQVV). Spectrin repeat units follow at residues 214 to 315 (QDYM…SHLK), 321 to 483 (HQFH…HALQ), and 503 to 610 (RQLL…EKVD). The SH3 domain maps to 397–453 (LKPIPVEALCDFESDQGLISRGYSYTLQKNNGESWELTDSTGKKLAAPAVCFIIPPT). The residue at position 463 (Ser-463) is a Phosphoserine. Coiled coils occupy residues 611-819 (VANR…RNSH) and 883-1644 (LSSG…SVAV). Phosphoserine occurs at positions 885, 947, 1583, and 1656. Positions 1556 to 1755 (ELDFLREENH…ELAVLVSGQK (200 aa)) are interacts with BFSP2 and VIM. Plectin repeat units lie at residues 1650 to 1684 (ENHL…WKMF) and 1699 to 1734 (VKGP…AAQY).

This sequence belongs to the plakin or cytolinker family. As to quaternary structure, homodimer or a heterodimer with EVPL. Found in a complex composed of PPL (via C-terminal linker domain), BFSP1 and BFSP2 in the retinal lens. Within the complex interacts (via C-terminal linker domain) with BFSP2. Interacts with VIM. Binds to the PH domain of AKT1. Interacts with FCGR1A. May interact with PPHLN1. As to expression, expressed in the retinal lens (at protein level).

The protein localises to the cell junction. Its subcellular location is the desmosome. The protein resides in the cytoplasm. It is found in the cytoskeleton. It localises to the cell membrane. Functionally, component of the cornified envelope of keratinocytes. May link the cornified envelope to desmosomes and intermediate filaments. May act as a localization signal in PKB/AKT-mediated signaling. This Mus musculus (Mouse) protein is Periplakin (Ppl).